A 94-amino-acid chain; its full sequence is MNRGIRTITRHFNKLNNLNFSSKYTPTFKTTPINSLPTFTKPNDSNNNVNKSSNDGVNNNIITSTIMRTIGFDQFLLCVINDDDDEQTLIYQNF.

A compositionally biased stretch (polar residues) spans 33-42 (INSLPTFTKP). Residues 33-57 (INSLPTFTKPNDSNNNVNKSSNDGV) are disordered. Positions 43–57 (NDSNNNVNKSSNDGV) are enriched in low complexity.

This is an uncharacterized protein from Dictyostelium discoideum (Social amoeba).